The primary structure comprises 134 residues: Interleukin-5 (134 aa).

Residues 1–19 (MRMLLHLSLLALGAAYVYA) form the signal peptide. T22 carries O-linked (GalNAc...) threonine glycosylation. N47 carries an N-linked (GlcNAc...) asparagine glycan.

It belongs to the IL-5 family. As to quaternary structure, homodimer; disulfide-linked. Interacts with IL5RA. Interacts with CSF2RB. Present in peripheral blood mononuclear cells.

Its subcellular location is the secreted. Homodimeric cytokine expressed predominantly by T-lymphocytes and NK cells that plays an important role in the survival, differentiation, and chemotaxis of eosinophils. Also acts on activated and resting B-cells to induce immunoglobulin production, growth, and differentiation. Mechanistically, exerts its biological effects through a receptor composed of IL5RA subunit and the cytokine receptor common subunit beta/CSF2RB. Binding to the receptor leads to activation of various kinases including LYN, SYK and JAK2 and thereby propagates signals through the RAS-MAPK and JAK-STAT5 pathways respectively. The sequence is that of Interleukin-5 (IL5) from Homo sapiens (Human).